The primary structure comprises 120 residues: Aspartate 1-decarboxylase (120 aa).

Serine 25 acts as the Schiff-base intermediate with substrate; via pyruvic acid in catalysis. At serine 25 the chain carries Pyruvic acid (Ser). Threonine 57 contacts substrate. Residue tyrosine 58 is the Proton donor of the active site. Glycine 73–alanine 75 lines the substrate pocket.

It belongs to the PanD family. Heterooctamer of four alpha and four beta subunits. It depends on pyruvate as a cofactor. In terms of processing, is synthesized initially as an inactive proenzyme, which is activated by self-cleavage at a specific serine bond to produce a beta-subunit with a hydroxyl group at its C-terminus and an alpha-subunit with a pyruvoyl group at its N-terminus.

The protein resides in the cytoplasm. It carries out the reaction L-aspartate + H(+) = beta-alanine + CO2. It participates in cofactor biosynthesis; (R)-pantothenate biosynthesis; beta-alanine from L-aspartate: step 1/1. In terms of biological role, catalyzes the pyruvoyl-dependent decarboxylation of aspartate to produce beta-alanine. The protein is Aspartate 1-decarboxylase of Deinococcus geothermalis (strain DSM 11300 / CIP 105573 / AG-3a).